Consider the following 56-residue polypeptide: Potassium channel toxin alpha-KTx 9.8 (56 aa).

Positions methionine 1–alanine 19 are cleaved as a signal peptide. The propeptide occupies isoleucine 20–alanine 28. 3 disulfide bridges follow: cysteine 31–cysteine 47, cysteine 34–cysteine 52, and cysteine 38–cysteine 54.

It belongs to the short scorpion toxin superfamily. Potassium channel inhibitor family. Alpha-KTx 09 subfamily. Expressed by the venom gland.

It localises to the secreted. Its function is as follows. Potassium channel inhibitor. This is Potassium channel toxin alpha-KTx 9.8 from Buthus israelis (Israeli scorpion).